Reading from the N-terminus, the 468-residue chain is ERO1-like protein alpha (468 aa).

An N-terminal signal peptide occupies residues 1–23 (MGRRWGFLIGFLVAVGLLGLGHG). 8 disulfides stabilise this stretch: cysteine 35-cysteine 48, cysteine 37-cysteine 46, cysteine 85-cysteine 391, cysteine 94-cysteine 99, cysteine 94-cysteine 131, cysteine 99-cysteine 104, cysteine 208-cysteine 241, and cysteine 394-cysteine 397. Serine 106, serine 143, and serine 145 each carry phosphoserine. FAD is bound by residues arginine 187, threonine 189, and tryptophan 200. FAD-binding residues include serine 252 and histidine 255. A glycan (N-linked (GlcNAc...) asparagine) is linked at asparagine 280. FAD is bound by residues arginine 287 and arginine 300. A glycan (N-linked (GlcNAc...) asparagine) is linked at asparagine 384.

This sequence belongs to the EROs family. As to quaternary structure, predominantly monomer. May function both as a monomer and a homodimer. Interacts with PDILT. Interacts with ERP44; the interaction results in retention of ERO1A in the endoplasmic reticulum. FAD is required as a cofactor. Post-translationally, the Cys-94/Cys-99 and Cys-394/Cys-397 disulfide bonds constitute the redox-active center. The Cys-94/Cys-99 disulfide bond may accept electron from P4HB and funnel them to the active site disulfide Cys-394/Cys-397. The regulatory Cys-99/Cys-104 disulfide bond stabilizes the other regulatory bond Cys-94/Cys-131. Phosphorylated on Ser-145 by FAM20C in the Golgi which increases its enzymatic activity. Phosphorylation is induced by lactation. It is also induced by hypoxia and reductive stress.

The protein resides in the endoplasmic reticulum membrane. It localises to the golgi apparatus lumen. Its subcellular location is the secreted. It is found in the cell projection. The protein localises to the dendrite. Enzyme activity is tightly regulated to prevent the accumulation of reactive oxygen species in the endoplasmic reticulum. Reversibly down-regulated by the formation of disulfide bonds between the active site Cys-94 and Cys-131, and between Cys-99 and Cys-104. Glutathione may be required to regulate its activity in the endoplasmic reticulum. Oxidoreductase involved in disulfide bond formation in the endoplasmic reticulum. Efficiently reoxidizes P4HB/PDI, the enzyme catalyzing protein disulfide formation, in order to allow P4HB to sustain additional rounds of disulfide formation. Following P4HB reoxidation, passes its electrons to molecular oxygen via FAD, leading to the production of reactive oxygen species (ROS) in the cell. Required for the proper folding of immunoglobulins. Plays an important role in ER stress-induced, CHOP-dependent apoptosis by activating the inositol 1,4,5-trisphosphate receptor IP3R1. The sequence is that of ERO1-like protein alpha from Bos taurus (Bovine).